The sequence spans 287 residues: Ribosomal RNA small subunit methyltransferase I (287 aa).

The protein belongs to the methyltransferase superfamily. RsmI family.

It is found in the cytoplasm. The catalysed reaction is cytidine(1402) in 16S rRNA + S-adenosyl-L-methionine = 2'-O-methylcytidine(1402) in 16S rRNA + S-adenosyl-L-homocysteine + H(+). Functionally, catalyzes the 2'-O-methylation of the ribose of cytidine 1402 (C1402) in 16S rRNA. This Helicobacter pylori (strain ATCC 700392 / 26695) (Campylobacter pylori) protein is Ribosomal RNA small subunit methyltransferase I.